Reading from the N-terminus, the 270-residue chain is ATP synthase subunit delta (270 aa).

This sequence belongs to the ATPase delta chain family. As to quaternary structure, F-type ATPases have 2 components, F(1) - the catalytic core - and F(0) - the membrane proton channel. F(1) has five subunits: alpha(3), beta(3), gamma(1), delta(1), epsilon(1). F(0) has three main subunits: a(1), b(2) and c(10-14). The alpha and beta chains form an alternating ring which encloses part of the gamma chain. F(1) is attached to F(0) by a central stalk formed by the gamma and epsilon chains, while a peripheral stalk is formed by the delta and b chains.

The protein resides in the cell membrane. Functionally, f(1)F(0) ATP synthase produces ATP from ADP in the presence of a proton or sodium gradient. F-type ATPases consist of two structural domains, F(1) containing the extramembraneous catalytic core and F(0) containing the membrane proton channel, linked together by a central stalk and a peripheral stalk. During catalysis, ATP synthesis in the catalytic domain of F(1) is coupled via a rotary mechanism of the central stalk subunits to proton translocation. In terms of biological role, this protein is part of the stalk that links CF(0) to CF(1). It either transmits conformational changes from CF(0) to CF(1) or is implicated in proton conduction. In Kocuria rhizophila (strain ATCC 9341 / DSM 348 / NBRC 103217 / DC2201), this protein is ATP synthase subunit delta.